The following is a 122-amino-acid chain: Lithostathine (122 aa).

An N-terminal signal peptide occupies residues Met-1 to Gly-26. A propeptide spanning residues Glu-27–Arg-37 is cleaved from the precursor. The C-type lectin domain occupies Ile-38 to Trp-122. The cysteines at positions 40 and 51 are disulfide-linked.

Cleaved to give an A chain and a B chain joined by a disulfide bond. In terms of tissue distribution, in pancreatic acinar cells.

The protein localises to the secreted. Functionally, might act as an inhibitor of spontaneous calcium carbonate precipitation. The polypeptide is Lithostathine (PTP) (Sus scrofa (Pig)).